A 319-amino-acid chain; its full sequence is RWD domain-containing protein 2B (319 aa).

Positions 41 to 165 constitute an RWD domain; that stretch reads AELDLLASMF…EWVREHASGY (125 aa). At serine 275 the chain carries Phosphoserine.

Ubiquitous.

In Homo sapiens (Human), this protein is RWD domain-containing protein 2B (RWDD2B).